The primary structure comprises 340 residues: uncharacterized protein (340 aa).

The signal sequence occupies residues 1–20 (MGGARRLKLDGSIPNQLARA).

This is an uncharacterized protein from Mycobacterium tuberculosis (strain CDC 1551 / Oshkosh).